Consider the following 620-residue polypeptide: Chaperone protein DnaK (620 aa).

Thr197 carries the post-translational modification Phosphothreonine; by autocatalysis. The tract at residues 597–620 (AMANKNNAEQPKKKDDDVIDAEVE) is disordered.

Belongs to the heat shock protein 70 family.

Its function is as follows. Acts as a chaperone. This Helicobacter pylori (strain Shi470) protein is Chaperone protein DnaK.